Here is a 507-residue protein sequence, read N- to C-terminus: Nucleoporin p54 (507 aa).

A run of 9 repeats spans residues Phe5 to Gly6, Phe25 to Gly26, Phe28 to Gly29, Phe53 to Gly54, Phe61 to Gly62, Phe63 to Gly64, Phe67 to Gly68, Phe87 to Gly88, and Phe444 to Gly445. The tract at residues Phe5–Gly445 is 9 X 2 AA repeats of F-G.

Belongs to the NUP54 family. Component of the p62 complex, a complex composed of NUP62, NUP54, and the isoform p58 and isoform p45 of NUP58. Interacts with NUTF2. Post-translationally, O-glycosylated.

It is found in the nucleus. The protein resides in the nuclear pore complex. The protein localises to the nucleus membrane. Its function is as follows. Component of the nuclear pore complex, a complex required for the trafficking across the nuclear membrane. This is Nucleoporin p54 (NUP54) from Homo sapiens (Human).